A 233-amino-acid chain; its full sequence is Large ribosomal subunit protein uL1 (233 aa).

Belongs to the universal ribosomal protein uL1 family. As to quaternary structure, part of the 50S ribosomal subunit.

Binds directly to 23S rRNA. The L1 stalk is quite mobile in the ribosome, and is involved in E site tRNA release. Its function is as follows. Protein L1 is also a translational repressor protein, it controls the translation of the L11 operon by binding to its mRNA. The sequence is that of Large ribosomal subunit protein uL1 from Paracoccus denitrificans (strain Pd 1222).